A 319-amino-acid polypeptide reads, in one-letter code: Ribonuclease Z (319 aa).

Residues His-62, His-64, Asp-66, His-67, His-145, Asp-216, and His-274 each contribute to the Zn(2+) site. The active-site Proton acceptor is Asp-66.

This sequence belongs to the RNase Z family. Homodimer. Zn(2+) is required as a cofactor.

It catalyses the reaction Endonucleolytic cleavage of RNA, removing extra 3' nucleotides from tRNA precursor, generating 3' termini of tRNAs. A 3'-hydroxy group is left at the tRNA terminus and a 5'-phosphoryl group is left at the trailer molecule.. Zinc phosphodiesterase, which displays some tRNA 3'-processing endonuclease activity. Probably involved in tRNA maturation, by removing a 3'-trailer from precursor tRNA. In Parasynechococcus marenigrum (strain WH8102), this protein is Ribonuclease Z.